A 38-amino-acid polypeptide reads, in one-letter code: Photosystem I reaction center subunit IX (38 aa).

The helical transmembrane segment at 6-26 threads the bilayer; sequence YLSTAPVVATLWLFLTAGILI.

It belongs to the PsaJ family.

The protein resides in the plastid. Its subcellular location is the chloroplast thylakoid membrane. May help in the organization of the PsaE and PsaF subunits. The protein is Photosystem I reaction center subunit IX of Cyanidioschyzon merolae (strain NIES-3377 / 10D) (Unicellular red alga).